Consider the following 173-residue polypeptide: Alpha-crystallin A chain (173 aa).

An N-acetylmethionine modification is found at Met1. The segment at 1–63 (MDITIQHPWF…RTVLESGISE (63 aa)) is required for complex formation with BFSP1 and BFSP2. At Gln6 the chain carries Deamidated glutamine; partial. The residue at position 45 (Ser45) is a Phosphoserine. Residue Gln50 is modified to Deamidated glutamine; partial. The sHSP domain maps to 52–164 (LFRTVLESGI…SDRSIPVSRE (113 aa)). Lys70 and Lys99 each carry N6-acetyllysine. 3 residues coordinate Zn(2+): His100, Glu102, and His107. Ser122 carries the post-translational modification Phosphoserine. Asn123 is subject to Deamidated asparagine; partial. The span at 146–167 (IHSDMDASHSDRSIPVSREEKP) shows a compositional bias: basic and acidic residues. A disordered region spans residues 146 to 173 (IHSDMDASHSDRSIPVSREEKPTLAPSS). Position 154 (His154) interacts with Zn(2+). Residue Ser162 is glycosylated (O-linked (GlcNAc) serine).

It belongs to the small heat shock protein (HSP20) family. As to quaternary structure, heteromer composed of three CRYAA and one CRYAB subunits. Inter-subunit bridging via zinc ions enhances stability, which is crucial as there is no protein turn over in the lens. Can also form homodimers and homotetramers (dimers of dimers) which serve as the building blocks of homooligomers. Within homooligomers, the zinc-binding motif is created from residues of 3 different molecules. His-100 and Glu-102 from one molecule are ligands of the zinc ion, and His-107 and His-154 residues from additional molecules complete the site with tetrahedral coordination geometry. Part of a complex required for lens intermediate filament formation composed of BFSP1, BFSP2 and CRYAA. In terms of processing, acetylation at Lys-70 may increase chaperone activity. Post-translationally, undergoes age-dependent proteolytical cleavage at the C-terminus.

The protein localises to the cytoplasm. It is found in the nucleus. Functionally, contributes to the transparency and refractive index of the lens. Acts as a chaperone, preventing aggregation of various proteins under a wide range of stress conditions. Required for the correct formation of lens intermediate filaments as part of a complex composed of BFSP1, BFSP2 and CRYAA. The polypeptide is Alpha-crystallin A chain (CRYAA) (Osphranter rufus (Red kangaroo)).